The following is a 415-amino-acid chain: Carboxypeptidase G2 (415 aa).

The first 22 residues, 1 to 22 (MRPSIHRTAIAAVLATAFVAGT), serve as a signal peptide directing secretion. Histidine 112 is a Zn(2+) binding site. Aspartate 114 is an active-site residue. Residue aspartate 141 participates in Zn(2+) binding. Catalysis depends on glutamate 175, which acts as the Proton acceptor. 3 residues coordinate Zn(2+): glutamate 176, glutamate 200, and histidine 385.

It belongs to the peptidase M20A family. Homodimer. Zn(2+) is required as a cofactor.

It carries out the reaction Release of C-terminal glutamate residues from a wide range of N-acylating moieties, including peptidyl, aminoacyl, benzoyl, benzyloxycarbonyl, folyl and pteroyl groups.. Functionally, catalyzes the hydrolysis of reduced and non-reduced folates to pteroates and L-glutamate. This enzyme has a broad specificity. The sequence is that of Carboxypeptidase G2 (cpg2) from Pseudomonas sp. (strain RS-16).